A 223-amino-acid chain; its full sequence is Transcriptional regulator HMO1 (223 aa).

Disordered regions lie at residues isoleucine 69 to lysine 89 and aspartate 165 to proline 223. Positions glutamate 70–alanine 86 are enriched in basic and acidic residues. The HMG box DNA-binding region spans proline 87–glutamate 160. Residues lysine 204–proline 223 are compositionally biased toward basic residues.

Its subcellular location is the nucleus. In terms of biological role, transcription factor that binds upstream of hexose and ergosterol metabolism, as well as cell cycle genes. Activates pseudohyphal growth. The chain is Transcriptional regulator HMO1 (HMO1) from Candida albicans (strain SC5314 / ATCC MYA-2876) (Yeast).